A 385-amino-acid polypeptide reads, in one-letter code: tRNA pseudouridine synthase D (385 aa).

The Nucleophile role is filled by D65. Residues 143-345 (GCENYFGEQR…SDGVRKAFFK (203 aa)) form the TRUD domain.

This sequence belongs to the pseudouridine synthase TruD family.

The catalysed reaction is uridine(13) in tRNA = pseudouridine(13) in tRNA. Responsible for synthesis of pseudouridine from uracil-13 in transfer RNAs. The sequence is that of tRNA pseudouridine synthase D from Aquifex aeolicus (strain VF5).